Consider the following 741-residue polypeptide: Double-stranded RNA-specific editase 1 (741 aa).

The segment at 1–79 is disordered; sequence MDIEDEENMS…RRKTPGPVLP (79 aa). At S26 the chain carries Phosphoserine. Residues 33–49 are compositionally biased toward gly residues; that stretch reads PGPGEGSQLSNGGGGGP. Positions 63-73 are enriched in basic residues; the sequence is SKYRLKKRRKT. The DRBM 1 domain occupies 78–144; it reads LPKNALMQLN…AEKALRSFVQ (67 aa). Interaction with substrate RNA regions lie at residues 83-88 and 104-105; these read LMQLNE and VH. S149 is subject to Phosphoserine. Residues 231–298 form the DRBM 2 domain; sequence PSGKNPVMIL…AQSALAAIFN (68 aa). Interaction with substrate RNA stretches follow at residues 237-242 and H259; that span reads VMILNE. In terms of domain architecture, A to I editase spans 370 to 737; the sequence is SVSTGTKCIN…VEKPTEQDQF (368 aa). H394 serves as a coordination point for Zn(2+). E396 (proton donor) is an active-site residue. 1D-myo-inositol hexakisphosphate-binding residues include R400 and R401. C451 provides a ligand contact to Zn(2+). Positions 486–518 are disordered; it reads RPPGLLSDPSTSTFQGAGTTEPADRHPNRKARG. Over residues 493 to 503 the composition is skewed to polar residues; it reads DPSTSTFQGAG. C556 is a Zn(2+) binding site. The 1D-myo-inositol hexakisphosphate site is built by K559, R562, K669, K702, K712, and K730.

As to quaternary structure, homodimer. Homodimerization is essential for its catalytic activity. Can form heterodimers with isoform 5 of ADAR/ADAR1. 1D-myo-inositol hexakisphosphate serves as cofactor. In terms of tissue distribution, highly expressed in brain and heart and at lower levels in placenta. Fair expression in lung, liver and kidney. Detected in brain, heart, kidney, lung and liver (at protein level). As to expression, highly expressed in hippocampus and colon. Expressed in pediatric astrocytomas and the protein has a decreased RNA-editing activity. The decrease in RNA editing correlates with the grade of malignancy of the tumors, with the high grade tumors showing lower editing is seen.

It localises to the nucleus. The protein localises to the nucleolus. It catalyses the reaction adenosine in double-stranded RNA + H2O + H(+) = inosine in double-stranded RNA + NH4(+). Catalyzes the hydrolytic deamination of adenosine to inosine in double-stranded RNA (dsRNA) referred to as A-to-I RNA editing. This may affect gene expression and function in a number of ways that include mRNA translation by changing codons and hence the amino acid sequence of proteins; pre-mRNA splicing by altering splice site recognition sequences; RNA stability by changing sequences involved in nuclease recognition; genetic stability in the case of RNA virus genomes by changing sequences during viral RNA replication; and RNA structure-dependent activities such as microRNA production or targeting or protein-RNA interactions. Can edit both viral and cellular RNAs and can edit RNAs at multiple sites (hyper-editing) or at specific sites (site-specific editing). Its cellular RNA substrates include: bladder cancer-associated protein (BLCAP), neurotransmitter receptors for glutamate (GRIA2 and GRIK2) and serotonin (HTR2C), GABA receptor (GABRA3) and potassium voltage-gated channel (KCNA1). Site-specific RNA editing of transcripts encoding these proteins results in amino acid substitutions which consequently alter their functional activities. Edits GRIA2 at both the Q/R and R/G sites efficiently but converts the adenosine in hotspot1 much less efficiently. Can exert a proviral effect towards human immunodeficiency virus type 1 (HIV-1) and enhances its replication via both an editing-dependent and editing-independent mechanism. The former involves editing of adenosines in the 5'UTR while the latter occurs via suppression of EIF2AK2/PKR activation and function. Can inhibit cell proliferation and migration and can stimulate exocytosis. Its function is as follows. Has a lower catalytic activity than isoform 2. Functionally, has a higher catalytic activity than isoform 1. This is Double-stranded RNA-specific editase 1 from Homo sapiens (Human).